Consider the following 391-residue polypeptide: Processive diacylglycerol beta-glucosyltransferase (391 aa).

This sequence belongs to the glycosyltransferase 28 family. UgtP subfamily.

The protein resides in the cell membrane. It carries out the reaction a 1,2-diacyl-3-O-(beta-D-glucopyranosyl)-sn-glycerol + UDP-alpha-D-glucose = a 1,2-diacyl-3-O-(beta-D-Glc-(1-&gt;6)-beta-D-Glc)-sn-glycerol + UDP + H(+). The catalysed reaction is a 1,2-diacyl-sn-glycerol + UDP-alpha-D-glucose = a 1,2-diacyl-3-O-(beta-D-glucopyranosyl)-sn-glycerol + UDP + H(+). It participates in glycolipid metabolism; diglucosyl-diacylglycerol biosynthesis. Its function is as follows. Processive glucosyltransferase involved in the biosynthesis of both the bilayer- and non-bilayer-forming membrane glucolipids. Is able to successively transfer two glucosyl residues to diacylglycerol (DAG), thereby catalyzing the formation of beta-monoglucosyl-DAG (3-O-(beta-D-glucopyranosyl)-1,2-diacyl-sn-glycerol) and beta-diglucosyl-DAG (3-O-(beta-D-glucopyranosyl-beta-(1-&gt;6)-D-glucopyranosyl)-1,2-diacyl-sn-glycerol). Beta-diglucosyl-DAG is the predominant glycolipid found in Bacillales and is also used as a membrane anchor for lipoteichoic acid (LTA). This is Processive diacylglycerol beta-glucosyltransferase from Staphylococcus saprophyticus subsp. saprophyticus (strain ATCC 15305 / DSM 20229 / NCIMB 8711 / NCTC 7292 / S-41).